We begin with the raw amino-acid sequence, 204 residues long: Uracil-DNA glycosylase (204 aa).

Asp47 acts as the Proton acceptor in catalysis.

The protein belongs to the uracil-DNA glycosylase (UDG) superfamily. UNG family.

It localises to the host nucleus. The catalysed reaction is Hydrolyzes single-stranded DNA or mismatched double-stranded DNA and polynucleotides, releasing free uracil.. Its function is as follows. Excises uracil residues from the DNA which can arise as a result of misincorporation of dUMP residues by DNA polymerase or deamination of cytosines. Therefore may reduce deleterious uracil incorporation into the viral genome, particularly in terminally differentiated cells which lack DNA repair enzymes. This Bos taurus (Bovine) protein is Uracil-DNA glycosylase (UL2).